Here is a 367-residue protein sequence, read N- to C-terminus: DNA polymerase IV (367 aa).

In terms of domain architecture, UmuC spans 14-198; it reads IIHIDMDAFF…LPIAKFHGVG (185 aa). The Mg(2+) site is built by aspartate 18 and aspartate 116. The active site involves glutamate 117.

Belongs to the DNA polymerase type-Y family. As to quaternary structure, monomer. Mg(2+) serves as cofactor.

The protein localises to the cytoplasm. It carries out the reaction DNA(n) + a 2'-deoxyribonucleoside 5'-triphosphate = DNA(n+1) + diphosphate. Functionally, poorly processive, error-prone DNA polymerase involved in untargeted mutagenesis. Copies undamaged DNA at stalled replication forks, which arise in vivo from mismatched or misaligned primer ends. These misaligned primers can be extended by PolIV. Exhibits no 3'-5' exonuclease (proofreading) activity. May be involved in translesional synthesis, in conjunction with the beta clamp from PolIII. This Streptococcus thermophilus (strain ATCC BAA-491 / LMD-9) protein is DNA polymerase IV.